A 636-amino-acid polypeptide reads, in one-letter code: Threonine--tRNA ligase (636 aa).

The TGS domain occupies 1–63 (MSSISIALPD…KDDSRVEIIT (63 aa)). Residues 243–534 (DHRRLGRELD…LIEHYAGNFP (292 aa)) form a catalytic region. Cys335, His386, and His511 together coordinate Zn(2+).

The protein belongs to the class-II aminoacyl-tRNA synthetase family. In terms of assembly, homodimer. The cofactor is Zn(2+).

It is found in the cytoplasm. The enzyme catalyses tRNA(Thr) + L-threonine + ATP = L-threonyl-tRNA(Thr) + AMP + diphosphate + H(+). Functionally, catalyzes the attachment of threonine to tRNA(Thr) in a two-step reaction: L-threonine is first activated by ATP to form Thr-AMP and then transferred to the acceptor end of tRNA(Thr). Also edits incorrectly charged L-seryl-tRNA(Thr). This is Threonine--tRNA ligase from Pelobacter propionicus (strain DSM 2379 / NBRC 103807 / OttBd1).